A 246-amino-acid chain; its full sequence is tRNA (guanine-N(1)-)-methyltransferase (246 aa).

Residues G113 and 133–138 contribute to the S-adenosyl-L-methionine site; that span reads IGDFVM.

This sequence belongs to the RNA methyltransferase TrmD family. As to quaternary structure, homodimer.

Its subcellular location is the cytoplasm. It catalyses the reaction guanosine(37) in tRNA + S-adenosyl-L-methionine = N(1)-methylguanosine(37) in tRNA + S-adenosyl-L-homocysteine + H(+). In terms of biological role, specifically methylates guanosine-37 in various tRNAs. The protein is tRNA (guanine-N(1)-)-methyltransferase of Vibrio atlanticus (strain LGP32) (Vibrio splendidus (strain Mel32)).